A 245-amino-acid chain; its full sequence is 1-(5-phosphoribosyl)-5-[(5-phosphoribosylamino)methylideneamino] imidazole-4-carboxamide isomerase (245 aa).

Asp-8 serves as the catalytic Proton acceptor. Asp-130 acts as the Proton donor in catalysis.

This sequence belongs to the HisA/HisF family.

The protein resides in the cytoplasm. It catalyses the reaction 1-(5-phospho-beta-D-ribosyl)-5-[(5-phospho-beta-D-ribosylamino)methylideneamino]imidazole-4-carboxamide = 5-[(5-phospho-1-deoxy-D-ribulos-1-ylimino)methylamino]-1-(5-phospho-beta-D-ribosyl)imidazole-4-carboxamide. It participates in amino-acid biosynthesis; L-histidine biosynthesis; L-histidine from 5-phospho-alpha-D-ribose 1-diphosphate: step 4/9. The protein is 1-(5-phosphoribosyl)-5-[(5-phosphoribosylamino)methylideneamino] imidazole-4-carboxamide isomerase of Pseudomonas putida (strain GB-1).